Reading from the N-terminus, the 457-residue chain is Phenylalanine-4-hydroxylase (457 aa).

The region spanning 31–108 (TIVFTLREKA…EKKVLVQDWN (78 aa)) is the ACT domain. Fe cation contacts are provided by His285, His290, and Glu330.

The protein belongs to the biopterin-dependent aromatic amino acid hydroxylase family. As to quaternary structure, homotetramer. Requires Fe(2+) as cofactor. As to expression, expressed in the seam cells of the lateral hypodermis, in the ventral hypodermis and in the hyp7 hypodermal syncytium, in hypodermal cells in the tail and in body wall muscle cells (at protein level).

Its subcellular location is the cytoplasm. It carries out the reaction (6R)-L-erythro-5,6,7,8-tetrahydrobiopterin + L-phenylalanine + O2 = (4aS,6R)-4a-hydroxy-L-erythro-5,6,7,8-tetrahydrobiopterin + L-tyrosine. It catalyses the reaction (6R)-L-erythro-5,6,7,8-tetrahydrobiopterin + L-tryptophan + O2 = 5-hydroxy-L-tryptophan + (4aS,6R)-4a-hydroxy-L-erythro-5,6,7,8-tetrahydrobiopterin. Its pathway is amino-acid degradation; L-phenylalanine degradation; acetoacetate and fumarate from L-phenylalanine: step 1/6. Its activity is regulated as follows. Inhibited by tetrahydrobiopterin. Unlike its mammalian orthologs, pah-1 does not exhibit allosteric binding behavior for phenylalanine. Catalyzes the hydroxylation of L-phenylalanine to L-tyrosine. Catalyzes the hydroxylation of tryptophan to 5-hydroxy-L-tryptophan. Plays a role in the biosynthesis of a melanin-like cuticle pigment. The protein is Phenylalanine-4-hydroxylase of Caenorhabditis elegans.